The chain runs to 358 residues: Probable branched-chain-amino-acid aminotransferase (358 aa).

The residue at position 196 (lysine 196) is an N6-(pyridoxal phosphate)lysine.

Belongs to the class-IV pyridoxal-phosphate-dependent aminotransferase family. Pyridoxal 5'-phosphate serves as cofactor.

It catalyses the reaction L-leucine + 2-oxoglutarate = 4-methyl-2-oxopentanoate + L-glutamate. It carries out the reaction L-isoleucine + 2-oxoglutarate = (S)-3-methyl-2-oxopentanoate + L-glutamate. The enzyme catalyses L-valine + 2-oxoglutarate = 3-methyl-2-oxobutanoate + L-glutamate. It functions in the pathway amino-acid biosynthesis; L-isoleucine biosynthesis; L-isoleucine from 2-oxobutanoate: step 4/4. Its pathway is amino-acid biosynthesis; L-leucine biosynthesis; L-leucine from 3-methyl-2-oxobutanoate: step 4/4. The protein operates within amino-acid biosynthesis; L-valine biosynthesis; L-valine from pyruvate: step 4/4. Functionally, acts on leucine, isoleucine and valine. In Staphylococcus epidermidis (strain ATCC 12228 / FDA PCI 1200), this protein is Probable branched-chain-amino-acid aminotransferase (ilvE).